Here is a 410-residue protein sequence, read N- to C-terminus: LL-diaminopimelate aminotransferase (410 aa).

Residues Y15 and G42 each coordinate substrate. Residues Y72, 108-109 (SK), Y132, N187, Y218, and 246-248 (SFS) contribute to the pyridoxal 5'-phosphate site. Residues K109, Y132, and N187 each coordinate substrate. K249 is subject to N6-(pyridoxal phosphate)lysine. Residues R257 and N292 each coordinate pyridoxal 5'-phosphate. Residues N292 and R388 each coordinate substrate.

Belongs to the class-I pyridoxal-phosphate-dependent aminotransferase family. LL-diaminopimelate aminotransferase subfamily. In terms of assembly, homodimer. Requires pyridoxal 5'-phosphate as cofactor.

The catalysed reaction is (2S,6S)-2,6-diaminopimelate + 2-oxoglutarate = (S)-2,3,4,5-tetrahydrodipicolinate + L-glutamate + H2O + H(+). Its pathway is amino-acid biosynthesis; L-lysine biosynthesis via DAP pathway; LL-2,6-diaminopimelate from (S)-tetrahydrodipicolinate (aminotransferase route): step 1/1. Its function is as follows. Involved in the synthesis of meso-diaminopimelate (m-DAP or DL-DAP), required for both lysine and peptidoglycan biosynthesis. Catalyzes the direct conversion of tetrahydrodipicolinate to LL-diaminopimelate. The sequence is that of LL-diaminopimelate aminotransferase from Geotalea uraniireducens (strain Rf4) (Geobacter uraniireducens).